A 250-amino-acid chain; its full sequence is Triosephosphate isomerase (250 aa).

8–10 is a binding site for substrate; that stretch reads NWK. Residue His93 is the Electrophile of the active site. Glu165 acts as the Proton acceptor in catalysis. Gly171 and Ser211 together coordinate substrate.

It belongs to the triosephosphate isomerase family. Homodimer.

The protein localises to the cytoplasm. The catalysed reaction is D-glyceraldehyde 3-phosphate = dihydroxyacetone phosphate. Its pathway is carbohydrate biosynthesis; gluconeogenesis. It functions in the pathway carbohydrate degradation; glycolysis; D-glyceraldehyde 3-phosphate from glycerone phosphate: step 1/1. Its function is as follows. Involved in the gluconeogenesis. Catalyzes stereospecifically the conversion of dihydroxyacetone phosphate (DHAP) to D-glyceraldehyde-3-phosphate (G3P). The polypeptide is Triosephosphate isomerase (Malacoplasma penetrans (strain HF-2) (Mycoplasma penetrans)).